Consider the following 187-residue polypeptide: Large ribosomal subunit protein uL5 (187 aa).

This sequence belongs to the universal ribosomal protein uL5 family. In terms of assembly, part of the 50S ribosomal subunit; part of the 5S rRNA/L5/L18/L25 subcomplex. Contacts the 5S rRNA and the P site tRNA. Forms a bridge to the 30S subunit in the 70S ribosome.

This is one of the proteins that bind and probably mediate the attachment of the 5S RNA into the large ribosomal subunit, where it forms part of the central protuberance. In the 70S ribosome it contacts protein S13 of the 30S subunit (bridge B1b), connecting the 2 subunits; this bridge is implicated in subunit movement. Contacts the P site tRNA; the 5S rRNA and some of its associated proteins might help stabilize positioning of ribosome-bound tRNAs. This Mycolicibacterium smegmatis (strain ATCC 700084 / mc(2)155) (Mycobacterium smegmatis) protein is Large ribosomal subunit protein uL5.